The following is a 250-amino-acid chain: 2,3-bisphosphoglycerate-dependent phosphoglycerate mutase (250 aa).

Residues 8 to 15 (RHGESTWN), 21 to 22 (TG), Arg60, 87 to 90 (ERHY), Lys98, and 114 to 115 (RR) each bind substrate. His9 (tele-phosphohistidine intermediate) is an active-site residue. Glu87 functions as the Proton donor/acceptor in the catalytic mechanism. Positions 116 to 135 (SYDTPPPPLAANDPRSERSD) are disordered. A substrate-binding site is contributed by 183-184 (GN).

The protein belongs to the phosphoglycerate mutase family. BPG-dependent PGAM subfamily. Homodimer.

The catalysed reaction is (2R)-2-phosphoglycerate = (2R)-3-phosphoglycerate. The protein operates within carbohydrate degradation; glycolysis; pyruvate from D-glyceraldehyde 3-phosphate: step 3/5. In terms of biological role, catalyzes the interconversion of 2-phosphoglycerate and 3-phosphoglycerate. The polypeptide is 2,3-bisphosphoglycerate-dependent phosphoglycerate mutase (Polaromonas naphthalenivorans (strain CJ2)).